Reading from the N-terminus, the 535-residue chain is CTP synthase (535 aa).

The interval 1 to 266 is amidoligase domain; sequence MKTKFIFITG…DEQVVEKLNI (266 aa). Position 14 (Ser14) interacts with CTP. Ser14 is a binding site for UTP. ATP contacts are provided by residues 15-20 and Asp72; that span reads SIGKGL. The Mg(2+) site is built by Asp72 and Glu140. Residues 147–149, 187–192, and Lys223 each bind CTP; these read DIE and KTKPTQ. UTP contacts are provided by residues 187 to 192 and Lys223; that span reads KTKPTQ. Positions 292–534 constitute a Glutamine amidotransferase type-1 domain; it reads RIAIVGKYVN…IGASLTHRNQ (243 aa). Gly354 contributes to the L-glutamine binding site. The active-site Nucleophile; for glutamine hydrolysis is the Cys381. Residues 382–385, Glu405, and Arg462 each bind L-glutamine; that span reads LGMQ. Active-site residues include His507 and Glu509.

This sequence belongs to the CTP synthase family. Homotetramer.

It carries out the reaction UTP + L-glutamine + ATP + H2O = CTP + L-glutamate + ADP + phosphate + 2 H(+). It catalyses the reaction L-glutamine + H2O = L-glutamate + NH4(+). The catalysed reaction is UTP + NH4(+) + ATP = CTP + ADP + phosphate + 2 H(+). Its pathway is pyrimidine metabolism; CTP biosynthesis via de novo pathway; CTP from UDP: step 2/2. Its activity is regulated as follows. Allosterically activated by GTP, when glutamine is the substrate; GTP has no effect on the reaction when ammonia is the substrate. The allosteric effector GTP functions by stabilizing the protein conformation that binds the tetrahedral intermediate(s) formed during glutamine hydrolysis. Inhibited by the product CTP, via allosteric rather than competitive inhibition. Functionally, catalyzes the ATP-dependent amination of UTP to CTP with either L-glutamine or ammonia as the source of nitrogen. Regulates intracellular CTP levels through interactions with the four ribonucleotide triphosphates. The sequence is that of CTP synthase from Trichlorobacter lovleyi (strain ATCC BAA-1151 / DSM 17278 / SZ) (Geobacter lovleyi).